Reading from the N-terminus, the 149-residue chain is Phosphoribosyl-AMP cyclohydrolase (149 aa).

D92 serves as a coordination point for Mg(2+). C93 lines the Zn(2+) pocket. The Mg(2+) site is built by D94 and D96. Residues C111 and C118 each contribute to the Zn(2+) site.

The protein belongs to the PRA-CH family. In terms of assembly, homodimer. Mg(2+) is required as a cofactor. It depends on Zn(2+) as a cofactor.

It localises to the cytoplasm. The enzyme catalyses 1-(5-phospho-beta-D-ribosyl)-5'-AMP + H2O = 1-(5-phospho-beta-D-ribosyl)-5-[(5-phospho-beta-D-ribosylamino)methylideneamino]imidazole-4-carboxamide. It participates in amino-acid biosynthesis; L-histidine biosynthesis; L-histidine from 5-phospho-alpha-D-ribose 1-diphosphate: step 3/9. In terms of biological role, catalyzes the hydrolysis of the adenine ring of phosphoribosyl-AMP. In Rhizobium rhizogenes (strain K84 / ATCC BAA-868) (Agrobacterium radiobacter), this protein is Phosphoribosyl-AMP cyclohydrolase.